A 101-amino-acid chain; its full sequence is Small ribosomal subunit protein uS14 (101 aa).

The tract at residues 32-67 is disordered; it reads SDAKRSDEEREAARLGLQKLPRNANPTRQRNRCEIT. Over residues 33 to 44 the composition is skewed to basic and acidic residues; the sequence is DAKRSDEEREAA.

It belongs to the universal ribosomal protein uS14 family. In terms of assembly, part of the 30S ribosomal subunit. Contacts proteins S3 and S10.

Functionally, binds 16S rRNA, required for the assembly of 30S particles and may also be responsible for determining the conformation of the 16S rRNA at the A site. This Paracidovorax citrulli (strain AAC00-1) (Acidovorax citrulli) protein is Small ribosomal subunit protein uS14.